A 103-amino-acid chain; its full sequence is Cell division protein FtsB (103 aa).

Over 1–3 (MGK) the chain is Cytoplasmic. A helical membrane pass occupies residues 4 to 21 (LTLLLLAILVWLQYSLWF). Over 22-103 (GKNGIHDYTR…RAQSAGQNNR (82 aa)) the chain is Periplasmic. A coiled-coil region spans residues 28–71 (DYTRVNDDVAALQATNAKLKARNDQLFAEIDDLNGGQEALEERA).

Belongs to the FtsB family. As to quaternary structure, part of a complex composed of FtsB, FtsL and FtsQ.

It localises to the cell inner membrane. Essential cell division protein. May link together the upstream cell division proteins, which are predominantly cytoplasmic, with the downstream cell division proteins, which are predominantly periplasmic. In Shigella flexneri serotype 5b (strain 8401), this protein is Cell division protein FtsB.